The primary structure comprises 390 residues: 1-deoxy-D-xylulose 5-phosphate reductoisomerase (390 aa).

NADPH contacts are provided by T18, G19, S20, I21, and N130. K131 contributes to the 1-deoxy-D-xylulose 5-phosphate binding site. E132 contacts NADPH. D156 serves as a coordination point for Mn(2+). Positions 157, 158, 182, and 205 each coordinate 1-deoxy-D-xylulose 5-phosphate. E158 provides a ligand contact to Mn(2+). Residue G211 participates in NADPH binding. Positions 218, 223, 224, and 227 each coordinate 1-deoxy-D-xylulose 5-phosphate. Residue E227 coordinates Mn(2+).

Belongs to the DXR family. Mg(2+) is required as a cofactor. Mn(2+) serves as cofactor.

The enzyme catalyses 2-C-methyl-D-erythritol 4-phosphate + NADP(+) = 1-deoxy-D-xylulose 5-phosphate + NADPH + H(+). It participates in isoprenoid biosynthesis; isopentenyl diphosphate biosynthesis via DXP pathway; isopentenyl diphosphate from 1-deoxy-D-xylulose 5-phosphate: step 1/6. In terms of biological role, catalyzes the NADPH-dependent rearrangement and reduction of 1-deoxy-D-xylulose-5-phosphate (DXP) to 2-C-methyl-D-erythritol 4-phosphate (MEP). The protein is 1-deoxy-D-xylulose 5-phosphate reductoisomerase of Bacteroides thetaiotaomicron (strain ATCC 29148 / DSM 2079 / JCM 5827 / CCUG 10774 / NCTC 10582 / VPI-5482 / E50).